Consider the following 297-residue polypeptide: Pyridoxal 5'-phosphate synthase subunit PdxS (297 aa).

Asp-27 contacts D-ribose 5-phosphate. Catalysis depends on Lys-84, which acts as the Schiff-base intermediate with D-ribose 5-phosphate. Gly-156 is a binding site for D-ribose 5-phosphate. Residue Arg-168 participates in D-glyceraldehyde 3-phosphate binding. Residues Gly-217 and 238-239 contribute to the D-ribose 5-phosphate site; that span reads GS.

The protein belongs to the PdxS/SNZ family. In terms of assembly, in the presence of PdxT, forms a dodecamer of heterodimers.

The catalysed reaction is aldehydo-D-ribose 5-phosphate + D-glyceraldehyde 3-phosphate + L-glutamine = pyridoxal 5'-phosphate + L-glutamate + phosphate + 3 H2O + H(+). It participates in cofactor biosynthesis; pyridoxal 5'-phosphate biosynthesis. Its function is as follows. Catalyzes the formation of pyridoxal 5'-phosphate from ribose 5-phosphate (RBP), glyceraldehyde 3-phosphate (G3P) and ammonia. The ammonia is provided by the PdxT subunit. Can also use ribulose 5-phosphate and dihydroxyacetone phosphate as substrates, resulting from enzyme-catalyzed isomerization of RBP and G3P, respectively. This Corynebacterium diphtheriae (strain ATCC 700971 / NCTC 13129 / Biotype gravis) protein is Pyridoxal 5'-phosphate synthase subunit PdxS.